Here is a 373-residue protein sequence, read N- to C-terminus: Potential protein lysine methyltransferase SET6 (373 aa).

One can recognise an SET domain in the interval 12–338 (PFFQVRQTKW…KDEQICIDYS (327 aa)).

This sequence belongs to the class V-like SAM-binding methyltransferase superfamily.

Its function is as follows. Involved in resistance to compounds that target ergosterol biosynthesis, including fenpropimorph, dyclonine, and alverine citrate. Since a deletion in the absence of these compounds does not have an effect on growth, is more likely to be involved in compound availability. The protein is Potential protein lysine methyltransferase SET6 (SET6) of Saccharomyces cerevisiae (strain ATCC 204508 / S288c) (Baker's yeast).